A 366-amino-acid chain; its full sequence is DNA replication and repair protein RecF (366 aa).

30-37 (GDNGMGKT) contributes to the ATP binding site.

Belongs to the RecF family.

The protein resides in the cytoplasm. Functionally, the RecF protein is involved in DNA metabolism; it is required for DNA replication and normal SOS inducibility. RecF binds preferentially to single-stranded, linear DNA. It also seems to bind ATP. This Azobacteroides pseudotrichonymphae genomovar. CFP2 protein is DNA replication and repair protein RecF.